A 371-amino-acid polypeptide reads, in one-letter code: RxLR effector protein PITG_12731 (371 aa).

A signal peptide spans 1 to 24 (MRFYSVLLTIVTLIASTYDAKVNA). A RxLR-dEER motif is present at residues 43-53 (RMLRADHADER).

This sequence belongs to the RxLR effector family.

The protein resides in the secreted. Its subcellular location is the host nucleus. It is found in the host cytoplasm. In terms of biological role, effector that enhances P.infestans colonization of Nicotiana benthamiana leaves. This chain is RxLR effector protein PITG_12731, found in Phytophthora infestans (strain T30-4) (Potato late blight agent).